Here is a 113-residue protein sequence, read N- to C-terminus: MNTVRVTFLLVFVLAVSLGQADKDENRMEMQEKTEQGKSYLDFAENLLLQKLEELEAKLLEEDSEESRNSRQKRCIGEGVPCDENDPRCCSGLVCLKPALHGIWYKSYYCYKK.

Positions 1–21 (MNTVRVTFLLVFVLAVSLGQA) are cleaved as a signal peptide. Positions 22-74 (DKDENRMEMQEKTEQGKSYLDFAENLLLQKLEELEAKLLEEDSEESRNSRQKR) are excised as a propeptide. The interval 61-83 (EEDSEESRNSRQKRCIGEGVPCD) is disordered. 3 disulfides stabilise this stretch: Cys75-Cys90, Cys82-Cys95, and Cys89-Cys110.

The protein belongs to the neurotoxin 14 (magi-1) family. 01 (HNTX-16) subfamily. In terms of tissue distribution, expressed by the venom gland.

It is found in the secreted. Functionally, probable ion channel inhibitor. The protein is U11-theraphotoxin-Hhn1p of Cyriopagopus hainanus (Chinese bird spider).